Consider the following 515-residue polypeptide: SWI/SNF-related matrix-associated actin-dependent regulator of chromatin subfamily D member 1 (515 aa).

The interval 1-103 (MAARAGFQSV…SGMDQSRKRP (103 aa)) is disordered. Residues 14–23 (GGAGASGGAG) are compositionally biased toward gly residues. An interaction with ESR1, NR1H4, NR3C1, PGR and SMARCA4 region spans residues 43–167 (APGQGLYRSP…DQTIMRKRLD (125 aa)). Residues Arg-68 and Arg-88 each carry the asymmetric dimethylarginine modification. Lys-101 is covalently cross-linked (Glycyl lysine isopeptide (Lys-Gly) (interchain with G-Cter in SUMO2)). The segment at 168–474 (IQEALKRPIK…TMTDVVGNPE (307 aa)) is interaction with SMARCC1 and SMARCC2. The tract at residues 180 to 515 (RKLRIFISNT…LEQALGIRNT (336 aa)) is necessary for GR/NR3C1-mediated remodeling and transcription from chromatin; required for GR/NR3C1 interaction with the BRG1/SMARCA4 complex in vivo. Residue Thr-203 is modified to Phosphothreonine. N6-acetyllysine is present on Lys-223. The 78-residue stretch at 290–367 (YQPPQFKLDP…PQRLHALLMP (78 aa)) folds into the SWIB/MDM2 domain. Residues 412-440 (ASQQEIATLDNKIHETIETINQLKTQREF) are a coiled coil.

The protein belongs to the SMARCD family. In terms of assembly, component of the multiprotein chromatin-remodeling complexes SWI/SNF: SWI/SNF-A (BAF), SWI/SNF-B (PBAF) and related complexes. The canonical complex contains a catalytic subunit (either SMARCA4/BRG1/BAF190A or SMARCA2/BRM/BAF190B), and at least SMARCE1, ACTL6A/BAF53, SMARCC1/BAF155, SMARCC2/BAF170, and SMARCB1/SNF5/BAF47. Other subunits specific to each of the complexes may also be present permitting several possible combinations developmentally and tissue specific. Component of the BAF complex, which includes at least actin (ACTB), ARID1A/BAF250A, ARID1B/BAF250B, SMARCA2/BRM, SMARCA4/BRG1/BAF190A, ACTL6A/BAF53, ACTL6B/BAF53B, SMARCE1/BAF57, SMARCC1/BAF155, SMARCC2/BAF170, SMARCB1/SNF5/INI1, and one or more SMARCD1/BAF60A, SMARCD2/BAF60B, or SMARCD3/BAF60C. In muscle cells, the BAF complex also contains DPF3. Component of neural progenitors-specific chromatin remodeling complex (npBAF complex) composed of at least, ARID1A/BAF250A or ARID1B/BAF250B, SMARCD1/BAF60A, SMARCD3/BAF60C, SMARCA2/BRM/BAF190B, SMARCA4/BRG1/BAF190A, SMARCB1/BAF47, SMARCC1/BAF155, SMARCE1/BAF57, SMARCC2/BAF170, PHF10/BAF45A, ACTL6A/BAF53A and actin. Component of neuron-specific chromatin remodeling complex (nBAF complex) composed of at least, ARID1A/BAF250A or ARID1B/BAF250B, SMARCD1/BAF60A, SMARCD3/BAF60C, SMARCA2/BRM/BAF190B, SMARCA4/BRG1/BAF190A, SMARCB1/BAF47, SMARCC1/BAF155, SMARCE1/BAF57, SMARCC2/BAF170, DPF1/BAF45B, DPF3/BAF45C, ACTL6B/BAF53B and actin. Component of the SWI/SNF-B (PBAF) chromatin remodeling complex, at least composed of SMARCA4/BRG1, SMARCB1/BAF47/SNF5, ACTL6A/BAF53A or ACTL6B/BAF53B, SMARCE1/BAF57, SMARCD1/BAF60A, SMARCD2/BAF60B, perhaps SMARCD3/BAF60C, SMARCC1/BAF155, SMARCC2/BAF170, PBRM1/BAF180, ARID2/BAF200 and actin (ACTB). Component of SWI/SNF (GBAF) subcomplex, which includes at least BICRA or BICRAL (mutually exclusive), BRD9, SS18, SMARCA2/BRM, SMARCA4/BRG1/BAF190A, ACTL6A/BAF53, SMARCC1/BAF155, and SMARCD1/BAF60A. Specifically interacts with the VDR heterodimer complex. Interacts with ESR1, NR3C1, NR1H4, PGR, SMARCA4, SMARCC1 and SMARCC2. Interacts with DPF2. Interacts with DPF3a (isoform 2 of DPF3/BAF45C) and with HDGFL2 in a DPF3a-dependent manner. Interacts with FOS, FOSB isoform 1 and 2, FOSL1 and FOSL2. As to expression, expressed in all tissues tested, including brain, heart, kidney, liver, lung, muscle, pancreas and placenta.

The protein resides in the nucleus. Functionally, involved in transcriptional activation and repression of select genes by chromatin remodeling (alteration of DNA-nucleosome topology). Component of SWI/SNF chromatin remodeling complexes that carry out key enzymatic activities, changing chromatin structure by altering DNA-histone contacts within a nucleosome in an ATP-dependent manner. Belongs to the neural progenitors-specific chromatin remodeling complex (npBAF complex) and the neuron-specific chromatin remodeling complex (nBAF complex). During neural development a switch from a stem/progenitor to a postmitotic chromatin remodeling mechanism occurs as neurons exit the cell cycle and become committed to their adult state. The transition from proliferating neural stem/progenitor cells to postmitotic neurons requires a switch in subunit composition of the npBAF and nBAF complexes. As neural progenitors exit mitosis and differentiate into neurons, npBAF complexes which contain ACTL6A/BAF53A and PHF10/BAF45A, are exchanged for homologous alternative ACTL6B/BAF53B and DPF1/BAF45B or DPF3/BAF45C subunits in neuron-specific complexes (nBAF). The npBAF complex is essential for the self-renewal/proliferative capacity of the multipotent neural stem cells. The nBAF complex along with CREST plays a role regulating the activity of genes essential for dendrite growth. Has a strong influence on vitamin D-mediated transcriptional activity from an enhancer vitamin D receptor element (VDRE). May be a link between mammalian SWI-SNF-like chromatin remodeling complexes and the vitamin D receptor (VDR) heterodimer. Mediates critical interactions between nuclear receptors and the BRG1/SMARCA4 chromatin-remodeling complex for transactivation. Interacts with AKIRIN2. In Homo sapiens (Human), this protein is SWI/SNF-related matrix-associated actin-dependent regulator of chromatin subfamily D member 1.